Consider the following 211-residue polypeptide: MSVTLHTTHGDLKVELFCEAVPKTAENFIALCAAGAYNDTPFHRLIPGFMIQGGDISLGPAANSQGTTPMLPFDDIPKGGTSIYHPSALNQEIHLPALRHNTRGILSMASRPVKNQTAPGSQGATGPTINGSQFFITFAAAPHLDGSSTVFGKVLNLTAEDEGGDVLSKLEKANVKTDKKGKVVQPKENEETEYETLRINRVTIHANPFAT.

The PPIase cyclophilin-type domain occupies 1–204 (MSVTLHTTHG…ETLRINRVTI (204 aa)).

This sequence belongs to the cyclophilin-type PPIase family. PPIL3 subfamily.

The catalysed reaction is [protein]-peptidylproline (omega=180) = [protein]-peptidylproline (omega=0). Functionally, PPIases accelerate the folding of proteins. It catalyzes the cis-trans isomerization of proline imidic peptide bonds in oligopeptides. The sequence is that of Peptidyl-prolyl cis-trans isomerase-like 3 (cyp10) from Emericella nidulans (strain FGSC A4 / ATCC 38163 / CBS 112.46 / NRRL 194 / M139) (Aspergillus nidulans).